A 282-amino-acid chain; its full sequence is Type 1 encapsulin shell protein (282 aa).

Belongs to the encapsulin family. Family 1 subfamily. In terms of assembly, initially thought to form a 180 subunit shell. Forms hollow shells composed of 240 subunits, making a shell about 42-43 nm in diameter. The monomer is capable of assuming 4 different conformations which allows packaging into the icosahedron. The shell has 12 pentameric and 30 hexameric capsomers which form the vertices and faces of the icosahedral nanocompartment.

The protein resides in the encapsulin nanocompartment. Shell component of a type 1 encapsulin nanocompartment. Assembles into proteinaceous icosahedral shells 42-43 nm in diameter with an iron- and phosphorus-rich core (1Fe:1.1P) which can store over 23,000-35,000 iron atoms (with a calculated maximum of 83,000 Fe). There are 2 types of negatively charged open pores in the cryo-electron structure; a 3-fold pore where 3 hexamers meet with a minimal size of 7.2 Angstroms and a 5-fold pore where pentamers meet with a minimal size of 2.3 Angstroms. The 2-fold pore seen in other encapsulin nanocompartments is closed. Empty compartments can be generated in E.coli. Both types of pore have extra density in their centers in the structure. 2 different cargo proteins have been identified (IMEF and Fer); when both are expressed in E.coli with the shell protein only IMEF is detected within the nanocompartment. E.coli expressing all 3 genes stores the largest amount of iron and is protected from Fe/H2O2-induced oxidative stress. Part of the iron-mineralizing encapsulin-associated Firmicute (IMEF) system. This is Type 1 encapsulin shell protein from Bacillus thermotolerans (Quasibacillus thermotolerans).